We begin with the raw amino-acid sequence, 166 residues long: Large ribosomal subunit protein uL10 (166 aa).

It belongs to the universal ribosomal protein uL10 family. Part of the ribosomal stalk of the 50S ribosomal subunit. The N-terminus interacts with L11 and the large rRNA to form the base of the stalk. The C-terminus forms an elongated spine to which L12 dimers bind in a sequential fashion forming a multimeric L10(L12)X complex.

Functionally, forms part of the ribosomal stalk, playing a central role in the interaction of the ribosome with GTP-bound translation factors. This is Large ribosomal subunit protein uL10 from Mesoplasma florum (strain ATCC 33453 / NBRC 100688 / NCTC 11704 / L1) (Acholeplasma florum).